The chain runs to 211 residues: Endonuclease III (211 aa).

A HhH domain is found at 111 to 130; the sequence is AHALESLPGVGHKTANVVLN. The [4Fe-4S] cluster site is built by Cys190, Cys197, Cys200, and Cys206.

It belongs to the Nth/MutY family. [4Fe-4S] cluster serves as cofactor.

It catalyses the reaction 2'-deoxyribonucleotide-(2'-deoxyribose 5'-phosphate)-2'-deoxyribonucleotide-DNA = a 3'-end 2'-deoxyribonucleotide-(2,3-dehydro-2,3-deoxyribose 5'-phosphate)-DNA + a 5'-end 5'-phospho-2'-deoxyribonucleoside-DNA + H(+). In terms of biological role, DNA repair enzyme that has both DNA N-glycosylase activity and AP-lyase activity. The DNA N-glycosylase activity releases various damaged pyrimidines from DNA by cleaving the N-glycosidic bond, leaving an AP (apurinic/apyrimidinic) site. The AP-lyase activity cleaves the phosphodiester bond 3' to the AP site by a beta-elimination, leaving a 3'-terminal unsaturated sugar and a product with a terminal 5'-phosphate. In Treponema pallidum (strain Nichols), this protein is Endonuclease III.